The chain runs to 81 residues: ATP synthase subunit c (81 aa).

2 helical membrane-spanning segments follow: residues 5 to 25 (IAAG…IGAG) and 57 to 77 (VGLV…FVFA).

Belongs to the ATPase C chain family. F-type ATPases have 2 components, F(1) - the catalytic core - and F(0) - the membrane proton channel. F(1) has five subunits: alpha(3), beta(3), gamma(1), delta(1), epsilon(1). F(0) has three main subunits: a(1), b(2) and c(10-14). The alpha and beta chains form an alternating ring which encloses part of the gamma chain. F(1) is attached to F(0) by a central stalk formed by the gamma and epsilon chains, while a peripheral stalk is formed by the delta and b chains.

It localises to the cell membrane. Functionally, f(1)F(0) ATP synthase produces ATP from ADP in the presence of a proton or sodium gradient. F-type ATPases consist of two structural domains, F(1) containing the extramembraneous catalytic core and F(0) containing the membrane proton channel, linked together by a central stalk and a peripheral stalk. During catalysis, ATP synthesis in the catalytic domain of F(1) is coupled via a rotary mechanism of the central stalk subunits to proton translocation. In terms of biological role, key component of the F(0) channel; it plays a direct role in translocation across the membrane. A homomeric c-ring of between 10-14 subunits forms the central stalk rotor element with the F(1) delta and epsilon subunits. In Mycobacterium bovis (strain ATCC BAA-935 / AF2122/97), this protein is ATP synthase subunit c.